We begin with the raw amino-acid sequence, 561 residues long: Asparagine synthetase [glutamine-hydrolyzing] (561 aa).

Cys-2 (for GATase activity) is an active-site residue. A Glutamine amidotransferase type-2 domain is found at 2 to 191; sequence CGIWALFGSD…PGHYEVLDLK (190 aa). L-glutamine is bound by residues 49–53, 75–77, and Asp-97; these read RLAVV and NGE. The region spanning 213 to 536 is the Asparagine synthetase domain; it reads HALYDGVEKL…PGRADWLPHY (324 aa). Residues Leu-256, Ile-288, and 363 to 364 each bind ATP; that span reads SG. Lys-385 is modified (N6-acetyllysine). Residue Thr-545 is modified to Phosphothreonine.

The enzyme catalyses L-aspartate + L-glutamine + ATP + H2O = L-asparagine + L-glutamate + AMP + diphosphate + H(+). The protein operates within amino-acid biosynthesis; L-asparagine biosynthesis; L-asparagine from L-aspartate (L-Gln route): step 1/1. In Bos taurus (Bovine), this protein is Asparagine synthetase [glutamine-hydrolyzing] (ASNS).